The chain runs to 162 residues: 2-C-methyl-D-erythritol 2,4-cyclodiphosphate synthase (162 aa).

Residues Asp-8 and His-10 each contribute to the a divalent metal cation site. 4-CDP-2-C-methyl-D-erythritol 2-phosphate is bound by residues 8-10 and 36-37; these read DVH and HS. A divalent metal cation is bound at residue His-44. Residues 58 to 60, 63 to 67, 102 to 108, 134 to 137, Phe-141, and Arg-144 each bind 4-CDP-2-C-methyl-D-erythritol 2-phosphate; these read DIG, FPDTD, AQAPKMA, and TTTE.

It belongs to the IspF family. As to quaternary structure, homotrimer. A divalent metal cation is required as a cofactor.

It carries out the reaction 4-CDP-2-C-methyl-D-erythritol 2-phosphate = 2-C-methyl-D-erythritol 2,4-cyclic diphosphate + CMP. Its pathway is isoprenoid biosynthesis; isopentenyl diphosphate biosynthesis via DXP pathway; isopentenyl diphosphate from 1-deoxy-D-xylulose 5-phosphate: step 4/6. Its function is as follows. Involved in the biosynthesis of isopentenyl diphosphate (IPP) and dimethylallyl diphosphate (DMAPP), two major building blocks of isoprenoid compounds. Catalyzes the conversion of 4-diphosphocytidyl-2-C-methyl-D-erythritol 2-phosphate (CDP-ME2P) to 2-C-methyl-D-erythritol 2,4-cyclodiphosphate (ME-CPP) with a corresponding release of cytidine 5-monophosphate (CMP). This chain is 2-C-methyl-D-erythritol 2,4-cyclodiphosphate synthase, found in Yersinia pseudotuberculosis serotype O:1b (strain IP 31758).